The chain runs to 256 residues: Glutamate racemase (256 aa).

Residues 11–12 and 43–44 each bind substrate; these read DS and YG. Cys-74 (proton donor/acceptor) is an active-site residue. 75 to 76 is a binding site for substrate; sequence NT. The active-site Proton donor/acceptor is the Cys-182. 183–184 is a binding site for substrate; sequence TH.

This sequence belongs to the aspartate/glutamate racemases family.

The enzyme catalyses L-glutamate = D-glutamate. The protein operates within cell wall biogenesis; peptidoglycan biosynthesis. In terms of biological role, provides the (R)-glutamate required for cell wall biosynthesis. The sequence is that of Glutamate racemase from Leptospira interrogans serogroup Icterohaemorrhagiae serovar Lai (strain 56601).